Consider the following 59-residue polypeptide: Sec-independent protein translocase protein TatA (59 aa).

The chain crosses the membrane as a helical span at residues 1 to 21 (MGRLGLTEILVIVGIVILLFG).

This sequence belongs to the TatA/E family. In terms of assembly, forms a complex with TatC.

The protein resides in the cell inner membrane. Its function is as follows. Part of the twin-arginine translocation (Tat) system that transports large folded proteins containing a characteristic twin-arginine motif in their signal peptide across membranes. TatA could form the protein-conducting channel of the Tat system. This chain is Sec-independent protein translocase protein TatA, found in Flavobacterium johnsoniae (strain ATCC 17061 / DSM 2064 / JCM 8514 / BCRC 14874 / CCUG 350202 / NBRC 14942 / NCIMB 11054 / UW101) (Cytophaga johnsonae).